The sequence spans 490 residues: Capsid protein (490 aa).

The disordered stretch occupies residues 79–143 (GETSEEESDS…TQPKTIPGQK (65 aa)). Positions 81–94 (TSEEESDSGEEPEF) are enriched in acidic residues. Residues 95 to 111 (EQVRMDRTGGTEIPKEE) show a composition bias toward basic and acidic residues. Positions 122-125 (RKRK) match the Nuclear localization signal motif. A CCHC-type zinc finger spans residues 411-428 (CRCWICNIEGHYANECPN). Residues 464–490 (YKEEEEETSTEEDDGSSTSEDSDSESD) form a disordered region. Residues 465-490 (KEEEEETSTEEDDGSSTSEDSDSESD) are compositionally biased toward acidic residues.

It belongs to the caulimoviridae capsid protein family. In terms of assembly, interacts (via nuclear localization signal) with host importin alpha.

Its subcellular location is the virion. The protein resides in the host nucleus. Its function is as follows. Self assembles to form an icosahedral capsid, about 50 nm in diameter, nm, composed of 420 subunits of the viral capsid protein. The capsid encapsulates the genomic dsDNA. Following virus entry into host cell, provides nuclear import of the viral genome. Virus particles do not enter the nucleus, but dock at the nuclear membrane through the interaction with host importins. In Arabidopsis thaliana (Mouse-ear cress), this protein is Capsid protein.